Consider the following 199-residue polypeptide: Acireductone dioxygenase 1 (199 aa).

Fe(2+)-binding residues include H99, H101, E105, and H144. Ni(2+) is bound by residues H99, H101, E105, and H144.

Belongs to the acireductone dioxygenase (ARD) family. Requires Fe(2+) as cofactor. It depends on Ni(2+) as a cofactor.

It localises to the cytoplasm. The protein localises to the nucleus. The enzyme catalyses 1,2-dihydroxy-5-(methylsulfanyl)pent-1-en-3-one + O2 = 4-methylsulfanyl-2-oxobutanoate + formate + 2 H(+). The catalysed reaction is 1,2-dihydroxy-5-(methylsulfanyl)pent-1-en-3-one + O2 = 3-(methylsulfanyl)propanoate + CO + formate + 2 H(+). The protein operates within amino-acid biosynthesis; L-methionine biosynthesis via salvage pathway; L-methionine from S-methyl-5-thio-alpha-D-ribose 1-phosphate: step 5/6. Functionally, catalyzes 2 different reactions between oxygen and the acireductone 1,2-dihydroxy-3-keto-5-methylthiopentene (DHK-MTPene) depending upon the metal bound in the active site. Fe-containing acireductone dioxygenase (Fe-ARD) produces formate and 2-keto-4-methylthiobutyrate (KMTB), the alpha-ketoacid precursor of methionine in the methionine recycle pathway. Ni-containing acireductone dioxygenase (Ni-ARD) produces methylthiopropionate, carbon monoxide and formate, and does not lie on the methionine recycle pathway. This chain is Acireductone dioxygenase 1 (ARD1), found in Arabidopsis thaliana (Mouse-ear cress).